The primary structure comprises 465 residues: Casein kinase 1-like protein 2 (465 aa).

The Protein kinase domain occupies 9–277; that stretch reads FRLGRKIGGG…LKRLFRDLFI (269 aa). ATP contacts are provided by residues 15–23 and K38; that span reads IGGGSFGEI. D128 acts as the Proton acceptor in catalysis. Disordered regions lie at residues 300 to 344 and 396 to 428; these read STPP…GIPR and REAA…VSRN. A compositionally biased stretch (polar residues) spans 405 to 428; it reads SEPSNPQIVEAGSGSNSKIPVSRN.

The protein belongs to the protein kinase superfamily. CK1 Ser/Thr protein kinase family. Casein kinase I subfamily. Monomer. In terms of processing, autophosphorylated.

It is found in the cytoplasm. Its subcellular location is the nucleus. It carries out the reaction L-seryl-[protein] + ATP = O-phospho-L-seryl-[protein] + ADP + H(+). The catalysed reaction is L-threonyl-[protein] + ATP = O-phospho-L-threonyl-[protein] + ADP + H(+). Functionally, casein kinases are operationally defined by their preferential utilization of acidic proteins such as caseins as substrates. It can phosphorylate a large number of proteins. The protein is Casein kinase 1-like protein 2 of Arabidopsis thaliana (Mouse-ear cress).